The chain runs to 642 residues: Sodium- and chloride-dependent neutral and basic amino acid transporter B(0+) (642 aa).

The Cytoplasmic portion of the chain corresponds to 1 to 44; sequence MDKLKCPSFFKCREKEKVSASSENFHVGENDENQDRGNWSKKSD. The next 3 helical transmembrane spans lie at 45 to 65, 72 to 92, and 110 to 130; these read YLLS…FPYL, GAFL…LFFL, and ILPL…FVTI. At 131–234 the chain is on the extracellular side; that stretch reads YYNVIIAYSL…RSSGMNETGV (104 aa). N-linked (GlcNAc...) asparagine glycosylation is found at N155, N163, N174, N189, N197, N202, and N230. The next 2 helical transmembrane spans lie at 235 to 255 and 261 to 281; these read IVWY…AALF and SGKV…ILLV. An N-linked (GlcNAc...) asparagine glycan is attached at N302. 7 helical membrane-spanning segments follow: residues 315–335, 348–368, 399–419, 450–477, 480–500, 528–548, and 563–583; these read AATQ…ALSS, IVVC…IFSI, LAQL…LLTL, ITLG…VHLI, FCAG…IIWI, CWFV…LVQF, and VALG…MAII. The Cytoplasmic segment spans residues 584 to 642; the sequence is KIIQAKGNIFQRLISCCRPASNWGPYLEQHRGERYKDMVDPKKEADHEIPTVSGSRKPE. Over residues 622 to 632 the composition is skewed to basic and acidic residues; that stretch reads VDPKKEADHEI. The disordered stretch occupies residues 622–642; the sequence is VDPKKEADHEIPTVSGSRKPE.

Belongs to the sodium:neurotransmitter symporter (SNF) (TC 2.A.22) family. SLC6A14 subfamily. In terms of tissue distribution, levels are highest in adult and fetal lung, in trachea and salivary gland. Lower levels detected in mammary gland, stomach and pituitary gland, and very low levels in colon, uterus, prostate and testis.

The protein resides in the membrane. The protein localises to the apical cell membrane. It catalyses the reaction glycine(out) + chloride(out) + 2 Na(+)(out) = glycine(in) + chloride(in) + 2 Na(+)(in). The enzyme catalyses L-leucine(out) + chloride(out) + 2 Na(+)(out) = L-leucine(in) + chloride(in) + 2 Na(+)(in). The catalysed reaction is L-glutamine(out) + chloride(out) + 2 Na(+)(out) = L-glutamine(in) + chloride(in) + 2 Na(+)(in). It carries out the reaction L-arginine(out) + chloride(out) + 2 Na(+)(out) = L-arginine(in) + chloride(in) + 2 Na(+)(in). It catalyses the reaction (R)-carnitine(out) + chloride(out) + 2 Na(+)(out) = (R)-carnitine(in) + chloride(in) + 2 Na(+)(in). The enzyme catalyses O-butanoyl-(R)-carnitine(out) + chloride(out) + 2 Na(+)(out) = O-butanoyl-(R)-carnitine(in) + chloride(in) + 2 Na(+)(in). The catalysed reaction is O-propanoyl-(R)-carnitine(out) + chloride(out) + 2 Na(+)(out) = O-propanoyl-(R)-carnitine(in) + chloride(in) + 2 Na(+)(in). It carries out the reaction L-isoleucine(out) + chloride(out) + 2 Na(+)(out) = L-isoleucine(in) + chloride(in) + 2 Na(+)(in). It catalyses the reaction L-methionine(out) + chloride(out) + 2 Na(+)(out) = L-methionine(in) + chloride(in) + 2 Na(+)(in). The enzyme catalyses L-valine(out) + chloride(out) + 2 Na(+)(out) = L-valine(in) + chloride(in) + 2 Na(+)(in). The catalysed reaction is L-alanine(out) + chloride(out) + 2 Na(+)(out) = L-alanine(in) + chloride(in) + 2 Na(+)(in). It carries out the reaction L-serine(out) + chloride(out) + 2 Na(+)(out) = L-serine(in) + chloride(in) + 2 Na(+)(in). It catalyses the reaction L-cysteine(out) + chloride(out) + 2 Na(+)(out) = L-cysteine(in) + chloride(in) + 2 Na(+)(in). The enzyme catalyses L-asparagine(out) + chloride(out) + 2 Na(+)(out) = L-asparagine(in) + chloride(in) + 2 Na(+)(in). The catalysed reaction is L-threonine(out) + chloride(out) + 2 Na(+)(out) = L-threonine(in) + chloride(in) + 2 Na(+)(in). It carries out the reaction L-phenylalanine(out) + chloride(out) + 2 Na(+)(out) = L-phenylalanine(in) + chloride(in) + 2 Na(+)(in). It catalyses the reaction L-tryptophan(out) + chloride(out) + 2 Na(+)(out) = L-tryptophan(in) + chloride(in) + 2 Na(+)(in). The enzyme catalyses L-tyrosine(out) + chloride(out) + 2 Na(+)(out) = L-tyrosine(in) + chloride(in) + 2 Na(+)(in). The catalysed reaction is L-histidine(out) + chloride(out) + 2 Na(+)(out) = L-histidine(in) + chloride(in) + 2 Na(+)(in). It carries out the reaction L-lysine(out) + chloride(out) + 2 Na(+)(out) = L-lysine(in) + chloride(in) + 2 Na(+)(in). It catalyses the reaction beta-alanine(out) + chloride(out) + 2 Na(+)(out) = beta-alanine(in) + chloride(in) + 2 Na(+)(in). Amino acid transporter that plays an important role in the absorption of amino acids in the intestinal tract. Mediates the uptake of a broad range of neutral and cationic amino acids (with the exception of proline) in a Na(+)/Cl(-)-dependent manner. Transports non-alpha-amino acids such as beta-alanine with low affinity, and has a higher affinity for dipolar and cationic amino acids such as leucine and lysine. Can also transport carnitine, butirylcarnitine and propionylcarnitine coupled to the transmembrane gradients of Na(+) and Cl(-). The polypeptide is Sodium- and chloride-dependent neutral and basic amino acid transporter B(0+) (Homo sapiens (Human)).